The sequence spans 38 residues: Large ribosomal subunit protein bL36 (38 aa).

Belongs to the bacterial ribosomal protein bL36 family.

In Flavobacterium johnsoniae (strain ATCC 17061 / DSM 2064 / JCM 8514 / BCRC 14874 / CCUG 350202 / NBRC 14942 / NCIMB 11054 / UW101) (Cytophaga johnsonae), this protein is Large ribosomal subunit protein bL36.